The sequence spans 446 residues: UDP-N-acetylmuramate--L-alanine ligase (446 aa).

122–128 (GTHGKTT) contacts ATP.

It belongs to the MurCDEF family.

The protein resides in the cytoplasm. It catalyses the reaction UDP-N-acetyl-alpha-D-muramate + L-alanine + ATP = UDP-N-acetyl-alpha-D-muramoyl-L-alanine + ADP + phosphate + H(+). The protein operates within cell wall biogenesis; peptidoglycan biosynthesis. Its function is as follows. Cell wall formation. The polypeptide is UDP-N-acetylmuramate--L-alanine ligase (Nocardioides sp. (strain ATCC BAA-499 / JS614)).